A 129-amino-acid polypeptide reads, in one-letter code: Acyl carrier protein 2, chloroplastic (129 aa).

The transit peptide at 1 to 49 directs the protein to the chloroplast; the sequence is MASAAASAVSFARPVKAICVNSVSFSALRKDNVSFRLQPVPQRFSVCCA. In terms of domain architecture, Carrier spans 52–127; that stretch reads KETVEKVCDI…DAANLIDSLV (76 aa). Position 87 is an O-(pantetheine 4'-phosphoryl)serine (S87).

This sequence belongs to the acyl carrier protein (ACP) family. In terms of processing, 4'-phosphopantetheine is transferred from CoA to a specific serine of apo-ACP by acpS. This modification is essential for activity because fatty acids are bound in thioester linkage to the sulfhydryl of the prosthetic group.

Its subcellular location is the plastid. It is found in the chloroplast. Its pathway is lipid metabolism; fatty acid biosynthesis. Its function is as follows. Carrier of the growing fatty acid chain in fatty acid biosynthesis. The polypeptide is Acyl carrier protein 2, chloroplastic (ACL1.2) (Hordeum vulgare (Barley)).